The sequence spans 230 residues: Orotidine 5'-phosphate decarboxylase (230 aa).

Substrate-binding positions include D10, K32, 59–68 (DLKLHDIPNT), T118, R179, Q188, G208, and R209. The active-site Proton donor is the K61.

Belongs to the OMP decarboxylase family. Type 1 subfamily. Homodimer.

The catalysed reaction is orotidine 5'-phosphate + H(+) = UMP + CO2. The protein operates within pyrimidine metabolism; UMP biosynthesis via de novo pathway; UMP from orotate: step 2/2. Functionally, catalyzes the decarboxylation of orotidine 5'-monophosphate (OMP) to uridine 5'-monophosphate (UMP). This is Orotidine 5'-phosphate decarboxylase from Opitutus terrae (strain DSM 11246 / JCM 15787 / PB90-1).